A 205-amino-acid chain; its full sequence is uncharacterized protein (205 aa).

Belongs to the peptidase C56 family.

This is an uncharacterized protein from Methanocaldococcus jannaschii (strain ATCC 43067 / DSM 2661 / JAL-1 / JCM 10045 / NBRC 100440) (Methanococcus jannaschii).